Reading from the N-terminus, the 814-residue chain is DNA ligase (814 aa).

NAD(+) is bound by residues 46-50 (DAEYD), 95-96 (SL), and glutamate 129. The active-site N6-AMP-lysine intermediate is lysine 131. NAD(+) is bound by residues arginine 152, glutamate 189, lysine 305, and lysine 329. Residues cysteine 434, cysteine 437, cysteine 458, and cysteine 464 each contribute to the Zn(2+) site. The segment at 525-548 (LSAQRRSEGEPAPKKPTKKKGEEE) is disordered. A BRCT domain is found at 735–814 (TSAAAFAGKT…DDWLAMLAEA (80 aa)).

Belongs to the NAD-dependent DNA ligase family. LigA subfamily. Mg(2+) is required as a cofactor. Requires Mn(2+) as cofactor.

The enzyme catalyses NAD(+) + (deoxyribonucleotide)n-3'-hydroxyl + 5'-phospho-(deoxyribonucleotide)m = (deoxyribonucleotide)n+m + AMP + beta-nicotinamide D-nucleotide.. Its function is as follows. DNA ligase that catalyzes the formation of phosphodiester linkages between 5'-phosphoryl and 3'-hydroxyl groups in double-stranded DNA using NAD as a coenzyme and as the energy source for the reaction. It is essential for DNA replication and repair of damaged DNA. In Methylorubrum extorquens (strain PA1) (Methylobacterium extorquens), this protein is DNA ligase.